Consider the following 451-residue polypeptide: Gamma-aminobutyric acid receptor subunit alpha-2 (451 aa).

The N-terminal stretch at 1–28 (MRTKLSTCNVWFPLLVLLVWNPARLVLA) is a signal peptide. Residues 29 to 249 (NIQEDEAKNN…MTAHFHLKRK (221 aa)) lie on the Extracellular side of the membrane. N-linked (GlcNAc...) asparagine glycosylation occurs at Asn-38. Arg-94 provides a ligand contact to 4-aminobutanoate. N-linked (GlcNAc...) asparagine glycosylation is found at Asn-114 and Asn-138. Thr-157 contributes to the 4-aminobutanoate binding site. A disulfide bridge connects residues Cys-166 and Cys-180. A run of 3 helical transmembrane segments spans residues 250 to 270 (IGYF…LSQV), 281 to 300 (ARTV…SISA), and 312 to 332 (AMDW…IEFA). The Cytoplasmic segment spans residues 333 to 420 (TVNYFTKRGW…FNSVSKIDRM (88 aa)). Residues 389–408 (KSATTPEPNKKPENKPAEAK) are disordered. Residues 396–408 (PNKKPENKPAEAK) are compositionally biased toward basic and acidic residues. The helical transmembrane segment at 421 to 441 (SRIVFPVLFGTFNLVYWATYL) threads the bilayer. Over 442–451 (NREPVLGVSP) the chain is Extracellular.

The protein belongs to the ligand-gated ion channel (TC 1.A.9) family. Gamma-aminobutyric acid receptor (TC 1.A.9.5) subfamily. GABRA2 sub-subfamily. Heteropentamer, formed by a combination of alpha (GABRA1-6), beta (GABRB1-3), gamma (GABRG1-3), delta (GABRD), epsilon (GABRE), rho (GABRR1-3), pi (GABRP) and theta (GABRQ) subunits, each subunit exhibiting distinct physiological and pharmacological properties. Binds UBQLN1. Interacts with KIF21B. Interacts with LHFPL4. Interacts with SHISA7; interaction leads to the regulation of GABA(A) receptor trafficking, channel deactivation kinetics and pharmacology. Glycosylated. In terms of tissue distribution, expressed in brain (at protein level).

Its subcellular location is the postsynaptic cell membrane. It is found in the cell membrane. The protein resides in the cytoplasmic vesicle membrane. The protein localises to the cell projection. It localises to the dendrite. It carries out the reaction chloride(in) = chloride(out). Activated by pentobarbital. Inhibited by the antagonist bicuculline. Functionally, alpha subunit of the heteropentameric ligand-gated chloride channel gated by gamma-aminobutyric acid (GABA), a major inhibitory neurotransmitter in the brain. GABA-gated chloride channels, also named GABA(A) receptors (GABAAR), consist of five subunits arranged around a central pore and contain GABA active binding site(s) located at the alpha and beta subunit interface(s). When activated by GABA, GABAARs selectively allow the flow of chloride anions across the cell membrane down their electrochemical gradient. Chloride influx into the postsynaptic neuron following GABAAR opening decreases the neuron ability to generate a new action potential, thereby reducing nerve transmission. The alpha-2 subunit exhibits synaptogenic activity together with beta-2 and very little to no activity together with beta-3, the gamma-2 subunit being necessary but not sufficient to induce rapid synaptic contacts formation. The protein is Gamma-aminobutyric acid receptor subunit alpha-2 of Rattus norvegicus (Rat).